A 77-amino-acid polypeptide reads, in one-letter code: Small ribosomal subunit protein bS18 (77 aa).

It belongs to the bacterial ribosomal protein bS18 family. In terms of assembly, part of the 30S ribosomal subunit. Forms a tight heterodimer with protein bS6.

Its function is as follows. Binds as a heterodimer with protein bS6 to the central domain of the 16S rRNA, where it helps stabilize the platform of the 30S subunit. This Bacillus thuringiensis subsp. konkukian (strain 97-27) protein is Small ribosomal subunit protein bS18.